Here is a 381-residue protein sequence, read N- to C-terminus: Cytochrome b (381 aa).

Transmembrane regions (helical) follow at residues 34–54 (FGSL…FLAM), 78–99 (WLIR…YFHI), 114–134 (WNIG…GYVL), and 179–199 (FFAF…IHVL). Residues H84 and H98 each coordinate heme b. Residues H183 and H197 each coordinate heme b. Residue H202 participates in a ubiquinone binding. A run of 4 helical transmembrane segments spans residues 227 to 247 (YKDA…ALFL), 289 to 309 (LGGV…PFLH), 321 to 341 (LTQI…WIGG), and 348 to 368 (FILI…IALP).

The protein belongs to the cytochrome b family. In terms of assembly, the cytochrome bc1 complex contains 3 respiratory subunits (MT-CYB, CYC1 and UQCRFS1), 2 core proteins (UQCRC1 and UQCRC2) and probably 6 low-molecular weight proteins. It depends on heme b as a cofactor.

Its subcellular location is the mitochondrion inner membrane. In terms of biological role, component of the ubiquinol-cytochrome c reductase complex (complex III or cytochrome b-c1 complex) that is part of the mitochondrial respiratory chain. The b-c1 complex mediates electron transfer from ubiquinol to cytochrome c. Contributes to the generation of a proton gradient across the mitochondrial membrane that is then used for ATP synthesis. This is Cytochrome b (mt-cyb) from Isurus oxyrinchus (Shortfin mako shark).